Reading from the N-terminus, the 622-residue chain is Elongation factor 4 (622 aa).

In terms of domain architecture, tr-type G spans A17–V201. GTP-binding positions include D29–T34 and N148–D151.

Belongs to the TRAFAC class translation factor GTPase superfamily. Classic translation factor GTPase family. LepA subfamily.

It localises to the cell membrane. It carries out the reaction GTP + H2O = GDP + phosphate + H(+). Its function is as follows. Required for accurate and efficient protein synthesis under certain stress conditions. May act as a fidelity factor of the translation reaction, by catalyzing a one-codon backward translocation of tRNAs on improperly translocated ribosomes. Back-translocation proceeds from a post-translocation (POST) complex to a pre-translocation (PRE) complex, thus giving elongation factor G a second chance to translocate the tRNAs correctly. Binds to ribosomes in a GTP-dependent manner. The polypeptide is Elongation factor 4 (Streptomyces avermitilis (strain ATCC 31267 / DSM 46492 / JCM 5070 / NBRC 14893 / NCIMB 12804 / NRRL 8165 / MA-4680)).